Here is a 510-residue protein sequence, read N- to C-terminus: Putative serine protease K12H4.7 (510 aa).

A signal peptide spans 1–19; the sequence is MKTLLAVLLAACVLTQVLS. The active-site Charge relay system is Ser187. A glycan (N-linked (GlcNAc...) asparagine) is linked at Asn234. The active-site Charge relay system is the Asp452. Asn473 carries N-linked (GlcNAc...) asparagine glycosylation. The active-site Charge relay system is the His477.

The protein belongs to the peptidase S28 family.

The sequence is that of Putative serine protease K12H4.7 from Caenorhabditis elegans.